The following is a 238-amino-acid chain: Ribonuclease-like storage protein (238 aa).

The N-terminal stretch at Met-1–Ala-23 is a signal peptide. An RNA-binding site is contributed by Gln-37. Cys-43 and Cys-49 are disulfide-bonded. RNA contacts are provided by residues His-61, Phe-109, His-112–Glu-113, and Lys-116–His-117. The active-site Proton donor is His-61. Disulfide bonds link Cys-76/Cys-120 and Cys-196/Cys-207. Residue Glu-113 is part of the active site. The active-site Proton acceptor is His-117.

Belongs to the RNase T2 family. Homodimer. Root.

Its function is as follows. May act as a storage protein providing a nitrogen source. Seems to have no RNase activity although it has conserved the active site residues. This Panax ginseng (Korean ginseng) protein is Ribonuclease-like storage protein.